We begin with the raw amino-acid sequence, 81 residues long: Photosystem I iron-sulfur center (81 aa).

4Fe-4S ferredoxin-type domains lie at 1–31 (MAHS…MVPW) and 39–68 (IASA…VRVY). [4Fe-4S] cluster contacts are provided by Cys-11, Cys-14, Cys-17, Cys-21, Cys-48, Cys-51, Cys-54, and Cys-58.

As to quaternary structure, the eukaryotic PSI reaction center is composed of at least 11 subunits. Requires [4Fe-4S] cluster as cofactor.

The protein resides in the plastid. Its subcellular location is the chloroplast thylakoid membrane. It catalyses the reaction reduced [plastocyanin] + hnu + oxidized [2Fe-2S]-[ferredoxin] = oxidized [plastocyanin] + reduced [2Fe-2S]-[ferredoxin]. Its function is as follows. Apoprotein for the two 4Fe-4S centers FA and FB of photosystem I (PSI); essential for photochemical activity. FB is the terminal electron acceptor of PSI, donating electrons to ferredoxin. The C-terminus interacts with PsaA/B/D and helps assemble the protein into the PSI complex. Required for binding of PsaD and PsaE to PSI. PSI is a plastocyanin-ferredoxin oxidoreductase, converting photonic excitation into a charge separation, which transfers an electron from the donor P700 chlorophyll pair to the spectroscopically characterized acceptors A0, A1, FX, FA and FB in turn. The protein is Photosystem I iron-sulfur center of Welwitschia mirabilis (Tree tumbo).